The chain runs to 123 residues: Large ribosomal subunit protein bL17 (123 aa).

The protein belongs to the bacterial ribosomal protein bL17 family. As to quaternary structure, part of the 50S ribosomal subunit. Contacts protein L32.

This Staphylococcus haemolyticus (strain JCSC1435) protein is Large ribosomal subunit protein bL17.